The primary structure comprises 347 residues: Phosphoribosylformylglycinamidine cyclo-ligase (347 aa).

This sequence belongs to the AIR synthase family.

It localises to the cytoplasm. It catalyses the reaction 2-formamido-N(1)-(5-O-phospho-beta-D-ribosyl)acetamidine + ATP = 5-amino-1-(5-phospho-beta-D-ribosyl)imidazole + ADP + phosphate + H(+). It functions in the pathway purine metabolism; IMP biosynthesis via de novo pathway; 5-amino-1-(5-phospho-D-ribosyl)imidazole from N(2)-formyl-N(1)-(5-phospho-D-ribosyl)glycinamide: step 2/2. This is Phosphoribosylformylglycinamidine cyclo-ligase from Desulfatibacillum aliphaticivorans.